A 431-amino-acid chain; its full sequence is Helix-loop-helix protein 11 (431 aa).

The segment at 88 to 109 (LANRSLSQPAPLSPTSLDPDRR) is disordered. The segment covering 91–103 (RSLSQPAPLSPTS) has biased composition (polar residues). Residues 112 to 163 (MRRQIANCNERRRMQSINAGFLALRALLPRKEGEKLSKAAILQQTADMVHQL) form the bHLH domain. Polar residues-rich tracts occupy residues 226–241 (TTTS…PRSN) and 248–257 (LPSSYASSAL). The disordered stretch occupies residues 226–311 (TTTSSQASSP…PPPTLPSLET (86 aa)). Positions 274 to 291 (TTSTPLSLLTLNGSPTSS) are enriched in low complexity.

As to expression, expressed in the pharynx, nerve cords, the H-shaped excretory cell, vulva muscles, and the anal depressor (at protein level). Expressed in the intestine (at protein level). In males, it is also expressed in the spicules and hyp7 cells of the hypodermis (at protein level).

It localises to the nucleus. In terms of biological role, transcriptional regulator. Component of a feedback loop involving atfs-1, atgl-1 and hlh-11. Binds to the promoter of the atgl-1 lipase to negatively regulate the expression of atgl-1, and thereby promoting fat oxidation in response to mitochondrial stress and mitochondrial respiration in the intestine. In addition, functions with atfs-1 to maintain lifespan. May have a role in fertility and in positively regulating body size. The protein is Helix-loop-helix protein 11 of Caenorhabditis elegans.